Here is a 549-residue protein sequence, read N- to C-terminus: Threonine--tRNA ligase catalytic subunit (549 aa).

Positions Asp142–Pro437 are catalytic. Residues Cys235, His286, and His414 each coordinate Zn(2+).

The protein belongs to the class-II aminoacyl-tRNA synthetase family. Homodimer. Probably interacts with its editing subunit. Zn(2+) serves as cofactor.

It localises to the cytoplasm. The enzyme catalyses tRNA(Thr) + L-threonine + ATP = L-threonyl-tRNA(Thr) + AMP + diphosphate + H(+). Functionally, catalyzes the attachment of threonine to tRNA(Thr) in a two-step reaction: L-threonine is first activated by ATP to form Thr-AMP and then transferred to the acceptor end of tRNA(Thr). Also activates L-serine and transfers it to tRNA(Thr) but cannot deacylate incorrectly charged amino acid; unlike most archaea the editing function is found in a freestanding protein. In Sulfolobus acidocaldarius (strain ATCC 33909 / DSM 639 / JCM 8929 / NBRC 15157 / NCIMB 11770), this protein is Threonine--tRNA ligase catalytic subunit.